Reading from the N-terminus, the 96-residue chain is Basic blue protein (96 aa).

The Phytocyanin domain maps to 1–96 (AVYVVGGSGG…SGMKIAVNAL (96 aa)). Residues H39, C79, H84, and M89 each coordinate Cu cation. A disulfide bridge links C52 with C85.

This Cucumis sativus (Cucumber) protein is Basic blue protein.